Reading from the N-terminus, the 163-residue chain is Probable ribosome biogenesis protein RLP24 (163 aa).

This sequence belongs to the eukaryotic ribosomal protein eL24 family. In terms of assembly, associated with nucleolar and cytoplasmic pre-60S particles. At the end of biogenesis it dissociates from cytoplasmic pre-60S particles and is likely to be exchanged for its ribosomal homolog, RPL24.

It is found in the nucleus. The protein resides in the nucleolus. Its function is as follows. Involved in the biogenesis of the 60S ribosomal subunit. Ensures the docking of GTPBP4/NOG1 to pre-60S particles. The sequence is that of Probable ribosome biogenesis protein RLP24 (Rsl24d1) from Mus musculus (Mouse).